The primary structure comprises 227 residues: Hydroxylase/desaturase asaB (227 aa).

It belongs to the asaB hydroxylase/desaturase family.

Its pathway is secondary metabolite biosynthesis. Functionally, hydroxylase/desaturase; part of the gene cluster that mediates the biosynthesis of aspergillic acid, a hydroxamic acid-containing pyrazinone with aliphatic side chains that originates from leucine (Leu) and isoleucine (Ile). Aspergillic acid has antibiotic properties and was shown to be lethal to mice. The first step in the pathway is the production of deoxyaspergillic acid via a condensation between the Ile amine and the Leu carboxylic acid, followed by a reductive release from the protein forming the dipeptide aldehyde NH(2)-Leu-Ile-CHO, which could undergo an intermolecular cyclization resulting in a dihydropyrazinone. As the NRPS asaC lacks a condensation domain, it is improbable that it is responsible for condensation of Leu and Ile. One possibility is that asaC acts on a previously condensed dipeptide and functions as a Leu-Ile reductase to yield deoxyaspergillic acid. After asaC forms deoxyaspergillic acid, the cytochrome P450 asaD oxidizes the pyrazinone to the hydroxamic acid-containing bioactive metabolite aspergillic acid. The hydroxylase/desaturase asaB can then convert aspergillic acid to hydroxyaspergillic acid. Both aspergillic acid and hydroxyaspergillic acid can form complexes with iron producing ferriaspergillin analogs. The chain is Hydroxylase/desaturase asaB from Aspergillus flavus (strain ATCC 200026 / FGSC A1120 / IAM 13836 / NRRL 3357 / JCM 12722 / SRRC 167).